Reading from the N-terminus, the 245-residue chain is Bax inhibitor 1 (245 aa).

The Cytoplasmic portion of the chain corresponds to Met1–His30. Residues Leu31–Leu51 form a helical membrane-spanning segment. The Lumenal segment spans residues Gln52 to Asp55. A helical transmembrane segment spans residues Phe56–Phe76. Over Tyr77–Leu88 the chain is Cytoplasmic. The helical transmembrane segment at Gly89–Ile109 threads the bilayer. The Lumenal portion of the chain corresponds to Cys110–Ala115. Residues Ile116–Leu136 form a helical membrane-spanning segment. The Cytoplasmic segment spans residues Leu137–Lys142. Residues Tyr143 to Phe163 traverse the membrane as a helical segment. Topologically, residues Asn164–Ser169 are lumenal. Residues Tyr170 to Tyr190 traverse the membrane as a helical segment. The Cytoplasmic segment spans residues Asp191–Lys245.

It belongs to the BI1 family.

It is found in the endoplasmic reticulum membrane. Functionally, suppressor of apoptosis. Modulates unfolded protein response signaling. Negatively regulates autophagy and autophagosome formation, especially during periods of nutrient deprivation, and reduces cell survival during starvation. The protein is Bax inhibitor 1 of Drosophila melanogaster (Fruit fly).